The chain runs to 567 residues: TGF-beta receptor type-2 (567 aa).

Residues 1–23 form the signal peptide; that stretch reads MGRGLLRGLWPLHIVLWTRIAST. The Extracellular portion of the chain corresponds to 24-166; the sequence is IPPHVPKSVN…SPDLLLVIIQ (143 aa). 6 cysteine pairs are disulfide-bonded: C51/C84, C54/C71, C61/C67, C77/C101, C121/C136, and C138/C143. Residues N70 and N94 are each glycosylated (N-linked (GlcNAc...) asparagine). The helical transmembrane segment at 167–187 threads the bilayer; sequence VTGVSLLPPLGIAIAVIIIFY. Topologically, residues 188–567 are cytoplasmic; it reads CYRVHRQQKL…PEDGSLNTTK (380 aa). Residues 244–546 form the Protein kinase domain; that stretch reads IELDTLVGKG…RFSELEHPER (303 aa). ATP contacts are provided by residues 250 to 258 and K277; that span reads VGKGRFAEV. D379 (proton acceptor) is an active-site residue. 3 positions are modified to phosphoserine: S409, S548, and S553. Residues 545–567 form a disordered region; sequence ERLSGRSCSQEKIPEDGSLNTTK.

Belongs to the protein kinase superfamily. TKL Ser/Thr protein kinase family. TGFB receptor subfamily. In terms of assembly, homodimer. Heterohexamer; TGFB1, TGFB2 and TGFB3 homodimeric ligands assemble a functional receptor composed of two TGFBR1 and TGFBR2 heterodimers to form a ligand-receptor heterohexamer. The respective affinity of TGFRB1 and TGFRB2 for the ligands may modulate the kinetics of assembly of the receptor and may explain the different biological activities of TGFB1, TGFB2 and TGFB3. Component of a complex composed of TSC22D1 (via N-terminus), TGFBR1 and TGFBR2; the interaction between TSC22D1 and TGFBR1 is inhibited by SMAD7 and promoted by TGFB1. Interacts with DAXX. Interacts with DYNLT4. Interacts with ZFYVE9; ZFYVE9 recruits SMAD2 and SMAD3 to the TGF-beta receptor. Interacts with and is activated by SCUBE3; this interaction does not affect TGFB1-binding to TGFBR2. Interacts with VPS39; this interaction is independent of the receptor kinase activity and of the presence of TGF-beta. Interacts with CLU. Mg(2+) serves as cofactor. It depends on Mn(2+) as a cofactor. In terms of processing, phosphorylated on a Ser/Thr residue in the cytoplasmic domain. In terms of tissue distribution, widely expressed in adult. Expressed primarily in mesenchyme and epidermis of the midgestational fetus.

The protein localises to the cell membrane. Its subcellular location is the membrane raft. The catalysed reaction is L-threonyl-[receptor-protein] + ATP = O-phospho-L-threonyl-[receptor-protein] + ADP + H(+). It carries out the reaction L-seryl-[receptor-protein] + ATP = O-phospho-L-seryl-[receptor-protein] + ADP + H(+). In terms of biological role, transmembrane serine/threonine kinase forming with the TGF-beta type I serine/threonine kinase receptor, TGFBR1, the non-promiscuous receptor for the TGF-beta cytokines TGFB1, TGFB2 and TGFB3. Transduces the TGFB1, TGFB2 and TGFB3 signal from the cell surface to the cytoplasm and is thus regulating a plethora of physiological and pathological processes including cell cycle arrest in epithelial and hematopoietic cells, control of mesenchymal cell proliferation and differentiation, wound healing, extracellular matrix production, immunosuppression and carcinogenesis. The formation of the receptor complex composed of 2 TGFBR1 and 2 TGFBR2 molecules symmetrically bound to the cytokine dimer results in the phosphorylation and the activation of TGFRB1 by the constitutively active TGFBR2. Activated TGFBR1 phosphorylates SMAD2 which dissociates from the receptor and interacts with SMAD4. The SMAD2-SMAD4 complex is subsequently translocated to the nucleus where it modulates the transcription of the TGF-beta-regulated genes. This constitutes the canonical SMAD-dependent TGF-beta signaling cascade. Also involved in non-canonical, SMAD-independent TGF-beta signaling pathways. Has transforming growth factor beta-activated receptor activity. This is TGF-beta receptor type-2 (Tgfbr2) from Mus musculus (Mouse).